We begin with the raw amino-acid sequence, 132 residues long: Small ribosomal subunit protein uS8c (132 aa).

The protein belongs to the universal ribosomal protein uS8 family. In terms of assembly, part of the 30S ribosomal subunit.

The protein resides in the plastid. It is found in the chloroplast. One of the primary rRNA binding proteins, it binds directly to 16S rRNA central domain where it helps coordinate assembly of the platform of the 30S subunit. This chain is Small ribosomal subunit protein uS8c (rps8), found in Pinus thunbergii (Japanese black pine).